We begin with the raw amino-acid sequence, 59 residues long: UPF0434 protein Ping_0902 (59 aa).

It belongs to the UPF0434 family.

The chain is UPF0434 protein Ping_0902 from Psychromonas ingrahamii (strain DSM 17664 / CCUG 51855 / 37).